We begin with the raw amino-acid sequence, 36 residues long: Photosystem I reaction center subunit VIII (36 aa).

A helical transmembrane segment spans residues 6–28; it reads LPSIFVPLVGLMFPAIAMASLSL.

It belongs to the PsaI family.

It is found in the plastid. It localises to the chloroplast thylakoid membrane. Functionally, may help in the organization of the PsaL subunit. The chain is Photosystem I reaction center subunit VIII from Calycanthus floridus var. glaucus (Eastern sweetshrub).